The chain runs to 669 residues: Leucine zipper putative tumor suppressor 2 (669 aa).

The span at 1–25 shows a compositional bias: low complexity; that stretch reads MAIVQTLPVPLEPAPEAATAPQAPV. 4 disordered regions span residues 1 to 56, 92 to 131, 150 to 201, and 215 to 323; these read MAIV…PTFF, NEDF…IPVS, PVLP…AADK, and GTLS…SDEA. The interval 1–332 is required for centrosomal localization; that stretch reads MAIVQTLPVP…ALLHCVLEGK (332 aa). A compositionally biased stretch (polar residues) spans 172 to 181; that stretch reads LSGSQGSLTQ. A compositionally biased stretch (low complexity) spans 187–199; the sequence is ASSSSSSSSSSAA. A compositionally biased stretch (polar residues) spans 215-233; it reads GTLSDSGRNSLSSLPTYST. Composition is skewed to low complexity over residues 241 to 251 and 267 to 283; these read SSPGGHLPSHG and GPSH…KSTG. S249 is modified (phosphoserine). Residues 284 to 295 are compositionally biased toward gly residues; that stretch reads SLGGRVAGGLLG. S296 carries the post-translational modification Phosphoserine. Residues 298 to 308 are compositionally biased toward polar residues; it reads TRASPDSSSCG. A compositionally biased stretch (pro residues) spans 311 to 320; that stretch reads SPPPPPPPPS. The stretch at 328 to 649 forms a coiled coil; sequence VLEGKLRDRE…LELEARELAD (322 aa). The segment at 447–669 is sufficient for interaction with CTNNB1; that stretch reads SGEISLLKQQ…CLEEITATEI (223 aa). A sufficient for interaction with KATNB1 and for inhibition of katanin-mediated microtubule severing region spans residues 450–669; sequence ISLLKQQLKE…CLEEITATEI (220 aa). S570 bears the Phosphoserine mark. The short motif at 631–640 is the Nuclear export signal element; sequence LEQELQQLSL.

The protein belongs to the LZTS2 family. In terms of assembly, interacts with KATNB1. Also interacts with CTNNB1, gamma-tubulin and KIF23. As to expression, highly expressed in prostate and testis, and at slightly lower levels in spleen, thymus, uterus, small intestine and colon.

The protein resides in the cytoplasm. It is found in the cytoskeleton. The protein localises to the microtubule organizing center. It localises to the centrosome. Its function is as follows. Negative regulator of katanin-mediated microtubule severing and release from the centrosome. Required for central spindle formation and the completion of cytokinesis. May negatively regulate axonal outgrowth by preventing the formation of microtubule bundles that are necessary for transport within the elongating axon. Negative regulator of the Wnt signaling pathway. Represses beta-catenin-mediated transcriptional activation by promoting the nuclear exclusion of beta-catenin. This Homo sapiens (Human) protein is Leucine zipper putative tumor suppressor 2.